The chain runs to 314 residues: tRNA pseudouridine synthase B (314 aa).

Residue H43 coordinates substrate. D48 serves as the catalytic Nucleophile. Substrate contacts are provided by Y76, Y179, and L200.

It belongs to the pseudouridine synthase TruB family. Type 1 subfamily.

It catalyses the reaction uridine(55) in tRNA = pseudouridine(55) in tRNA. In terms of biological role, responsible for synthesis of pseudouridine from uracil-55 in the psi GC loop of transfer RNAs. This chain is tRNA pseudouridine synthase B, found in Pectobacterium atrosepticum (strain SCRI 1043 / ATCC BAA-672) (Erwinia carotovora subsp. atroseptica).